We begin with the raw amino-acid sequence, 96 residues long: Histone-like protein p6 (96 aa).

The DNA-binding element occupies 1–19; the sequence is MAKMMQREITKTTVNVAKM.

Belongs to the phi29likevirus histone-like protein p6 family. In terms of assembly, homodimer. Homomultimer. Binds to double-stranded DNA giving rise to multimeric nucleoprotein complexes. Binding specificity for the viral DNA is based on supercoiling, the viral genome having a negative superhelicity lower than that of plasmid DNA. Interacts with the DNA replication protein p17; this interaction optimizes the binding of protein p6 at the viral DNA ends, thus favoring the initiation of replication.

Histone-like nucleoprotein that binds to the viral dsDNA and responsible for wrapping and compacting the viral DNA about 4-fold. Forms a nucleoprotein complex in which the DNA adopts a right-handed toroidal conformation winding around a protein core. Binds ito most, if not all, the viral genome, although with different affinity, the highest one corresponding to the genome ends. The formation of the nucleoprotein complex at the genome ends, activates the initiation of viral DNA replication. The binding of p6 would recruit the complex formed by the TP and the DNA polymerase to the origin. Protein p6 also represses early transcription from promoter C2, and, together with protein p4, represses transcription from promoters A2b and A2c and activates late transcription from promoter A3. Protein p6 is therefore involved in the early to late transcription switch. The formation of the nucleoprotein complex at the right end of the phage genome where the early promoter C2 is located affects local topology, which may contribute to the promoter repression. This Bacillus phage PZA (Bacteriophage PZA) protein is Histone-like protein p6 (6).